A 347-amino-acid chain; its full sequence is Tryptophan--tRNA ligase (347 aa).

ATP-binding positions include 10–12 (QAS) and 18–19 (GN). A 'HIGH' region motif is present at residues 11–19 (ASGRQHLGN). Position 140 (D140) interacts with L-tryptophan. ATP is bound by residues 152-154 (GND), I191, and 200-204 (KMSKS). The 'KMSKS' region signature appears at 200-204 (KMSKS).

This sequence belongs to the class-I aminoacyl-tRNA synthetase family. Homodimer.

It is found in the cytoplasm. The catalysed reaction is tRNA(Trp) + L-tryptophan + ATP = L-tryptophyl-tRNA(Trp) + AMP + diphosphate + H(+). Functionally, catalyzes the attachment of tryptophan to tRNA(Trp). This chain is Tryptophan--tRNA ligase, found in Mycoplasma genitalium (strain ATCC 33530 / DSM 19775 / NCTC 10195 / G37) (Mycoplasmoides genitalium).